We begin with the raw amino-acid sequence, 356 residues long: Neurogenic differentiation factor 1 (356 aa).

The segment at 1–94 (MTKSYSESGL…GPKKKKMTKA (94 aa)) is disordered. The segment covering 58-78 (EEEDEDEDLEEEEEEEEEDDD) has biased composition (acidic residues). The span at 81-93 (PKRRGPKKKKMTK) shows a compositional bias: basic residues. Positions 87–93 (KKKKMTK) match the Nuclear localization signal motif. One can recognise a bHLH domain in the interval 101–153 (LRRMKANARERNRMHGLNAALDNLRKVVPCYSKTQKLSKIETLRLAKNYIWAL). Residues S162, S259, S266, and S274 each carry the phosphoserine modification. S335 carries the phosphoserine; by CaMK2 modification.

In terms of assembly, efficient DNA-binding requires dimerization with another bHLH protein. Heterodimer with TCF3/E47; the heterodimer is inhibited in presence of ID2, but not NR0B2, to E-box element. Interacts with EP300; the interaction is inhibited by NR0B2. Interacts with RREB1. Interacts with ATOH8. Phosphorylated. In islet cells, phosphorylated on Ser-274 upon glucose stimulation; which may be required for nuclear localization. In activated neurons, phosphorylated on Ser-335; which promotes dendritic growth. Phosphorylated by MAPK1; phosphorylation regulates heterodimerization and DNA-binding activities. Phosphorylation on Ser-266 and Ser-274 increases transactivation on the insulin promoter in glucose-stimulated insulinoma cells.

It is found in the cytoplasm. The protein localises to the nucleus. In terms of biological role, acts as a transcriptional activator: mediates transcriptional activation by binding to E box-containing promoter consensus core sequences 5'-CANNTG-3'. Associates with the p300/CBP transcription coactivator complex to stimulate transcription of the secretin gene as well as the gene encoding the cyclin-dependent kinase inhibitor CDKN1A. Contributes to the regulation of several cell differentiation pathways, like those that promote the formation of early retinal ganglion cells, inner ear sensory neurons, granule cells forming either the cerebellum or the dentate gyrus cell layer of the hippocampus, endocrine islet cells of the pancreas and enteroendocrine cells of the small intestine. Together with PAX6 or SIX3, is required for the regulation of amacrine cell fate specification. Also required for dendrite morphogenesis and maintenance in the cerebellar cortex. Associates with chromatin to enhancer regulatory elements in genes encoding key transcriptional regulators of neurogenesis. The protein is Neurogenic differentiation factor 1 (NEUROD1) of Homo sapiens (Human).